Reading from the N-terminus, the 202-residue chain is Glycerol-3-phosphate acyltransferase (202 aa).

6 helical membrane passes run 3 to 23, 61 to 81, 87 to 107, 118 to 138, 144 to 164, and 167 to 187; these read NLII…LILA, IATI…LKFL, LLWS…YLLF, GAMI…WVVI, ISSL…FIFN, and LEIH…YKHL.

This sequence belongs to the PlsY family. Probably interacts with PlsX.

The protein resides in the cell inner membrane. The catalysed reaction is an acyl phosphate + sn-glycerol 3-phosphate = a 1-acyl-sn-glycero-3-phosphate + phosphate. It participates in lipid metabolism; phospholipid metabolism. Functionally, catalyzes the transfer of an acyl group from acyl-phosphate (acyl-PO(4)) to glycerol-3-phosphate (G3P) to form lysophosphatidic acid (LPA). This enzyme utilizes acyl-phosphate as fatty acyl donor, but not acyl-CoA or acyl-ACP. The protein is Glycerol-3-phosphate acyltransferase of Campylobacter jejuni subsp. jejuni serotype O:23/36 (strain 81-176).